The following is an 88-amino-acid chain: Protein K3 (88 aa).

An S1 motif domain is found at 8–82 (LPNAGDVIKG…TKGYIDVNYK (75 aa)). Binding to host EIF2AK2/PKR stretches follow at residues 43–53 (SVKMHMDRYVE) and 74–79 (KGYIDV).

This sequence belongs to the orthopoxvirus OPG041 family. Interacts with host EIF2AK2/PKR kinase.

In terms of biological role, viral mimic of eIF-2-alpha that acts as a pseudosubstrate for EIF2AK2/PKR kinase. Inhibits therefore eIF-2-alpha phosphorylation by host EIF2AK2/PKR kinase and prevents protein synthesis shutoff. Determinant of host species specificity. The chain is Protein K3 (OPG041) from Homo sapiens (Human).